We begin with the raw amino-acid sequence, 198 residues long: ATP-dependent Clp protease proteolytic subunit (198 aa).

Residue Ser-103 is the Nucleophile of the active site. The active site involves His-128.

Belongs to the peptidase S14 family. In terms of assembly, fourteen ClpP subunits assemble into 2 heptameric rings which stack back to back to give a disk-like structure with a central cavity, resembling the structure of eukaryotic proteasomes.

Its subcellular location is the cytoplasm. The catalysed reaction is Hydrolysis of proteins to small peptides in the presence of ATP and magnesium. alpha-casein is the usual test substrate. In the absence of ATP, only oligopeptides shorter than five residues are hydrolyzed (such as succinyl-Leu-Tyr-|-NHMec, and Leu-Tyr-Leu-|-Tyr-Trp, in which cleavage of the -Tyr-|-Leu- and -Tyr-|-Trp bonds also occurs).. Functionally, cleaves peptides in various proteins in a process that requires ATP hydrolysis. Has a chymotrypsin-like activity. Plays a major role in the degradation of misfolded proteins. The polypeptide is ATP-dependent Clp protease proteolytic subunit (Vesicomyosocius okutanii subsp. Calyptogena okutanii (strain HA)).